Reading from the N-terminus, the 1235-residue chain is MPPQSKSITYLPLLYNPFLNCIFNNPHHSKNPFRQTVQELSENHNDYTILVPPAHILHELFDPSTEKSSTKIRLHDLCYHNEDFIRSHIIKTNTTYPSITSSKSSSAIYVTMNGKQILIKNGIVFTGKGFKKSLRLKVLDINYFNSFCDYFPKGSKFMILYIEDSMFGSFDPNVPVSMQSREMDEIKIEPTLKKDQQFHDITFEKLLRSFPLLSNAVSDKFYKLFHHNNYQFRLLRTNTRKKLSSIKFEFQSMLDEAFKVVSDSVKIDTPDSEQTYHLINYILRLYPGLDLNRLVHEYVELNLYDKLWAQLIFQFDFPDNDKQNDDSDAIKILTKEKYDHLACISLNQLDVPTDKPWHINELHKRIYKAIDEFSKLSDASILNSSGKTQILKNTVNILTNNVKQISEIESMTEKTGSDGITVNADILIGLLIMVIVHARVDNLEAHLYYIKHFNSVDYTNDGYFCYILSNFDAVIYHLSSSMNDEPQYAGLVKSSALNHKFWSLIDSGDTDNLLVLLDEVQQGLGDSKLPNNHFLNSRTVQGESCLMMAVKADNSDAFNYIINYNYQWFSIDDILFDKNTTTNQSLLTVALTQESYNIITQLVEIILSNTTLEEQILYFNSVDNSGRSAGHYFHHSPNLIDQIGFLIDWELKDLNSHTPLFSLCRCYDHPDYATLLEKGFDCIYKKYGKESIDFDKHIDKMGNTLLHIILKDLSKTKLLTSETNLINVNQLNYKNLTPLDLYVKYNRLENLKELLKDDRLDFKFEDSTNFYSVFDFLGSSTAKSPTNTVLKEIEKLIYNYCFINYYPNTDTEKIAALNARFDTTKKDWALFFIKSNKIPTLNAETLDRLRKFTYIFKLDHTHSFFPDNETFWLNFPQEKSMVPIFAKFRINRIIEHVNMYMISLNFHPILTNEKIFENFFVKNRNKSTLELINDITNRQESDKRKFSNLVLGIAQVNEIDFFLRFSLTDLVNFQTTIAKFNKLVAISDIKQSDLRIVTDRMFNCLFSSNILPSVLLREYNFALTNQYKNQDSSYKELLTFTAWLELSTIELTKNIRRILLKLDDWKELHKNIKELNIELTKYEEDAPTRYATVVRDSTTEADTTDTTDATDATHASPNLANSTNGNLQQAHQLEAEAEEIADTSSSFFSFASIIENKKARYKKLLLMKAEEIKKIMKLNAELKFDHECIAAEISNFLKFKSNFINLGIKRYVRLSLCLSKIRKYELTKLLNSCKR.

One can recognise a VPS9 domain in the interval 323 to 487 (QNDDSDAIKI…LSSSMNDEPQ (165 aa)). Positions 1097–1124 (STTEADTTDTTDATDATHASPNLANSTN) are disordered. Positions 1100–1115 (EADTTDTTDATDATHA) are enriched in low complexity.

It belongs to the UPF0507 family.

This chain is UPF0507 protein DEHA2G04334g, found in Debaryomyces hansenii (strain ATCC 36239 / CBS 767 / BCRC 21394 / JCM 1990 / NBRC 0083 / IGC 2968) (Yeast).